A 589-amino-acid polypeptide reads, in one-letter code: Serine/threonine-protein kinase STE7 homolog (589 aa).

Positions 1 to 18 (MTRTTRIDTQEATKHKDL) are enriched in basic and acidic residues. Disordered regions lie at residues 1–162 (MTRT…DPDN) and 185–232 (RQHY…PASS). Low complexity predominate over residues 24 to 33 (PLSLSSNPNP). Positions 57 to 69 (VKSTSGSLRSSDM) are enriched in polar residues. A compositionally biased stretch (low complexity) spans 92-121 (PTASSSATSTPTSNITGSSSASSIQFAQKS). Composition is skewed to polar residues over residues 127-136 (IVSQTLSRPS) and 144-162 (SGYS…DPDN). A compositionally biased stretch (basic residues) spans 185 to 203 (RQHYQNSHHHLPTTNRKRQ). Residues 206 to 220 (ISSISPTKSSAASSP) show a composition bias toward low complexity. The 317-residue stretch at 249 to 565 (LLTLKQLGSG…QLLEDKEHFF (317 aa)) folds into the Protein kinase domain. Residues 255-263 (LGSGNSGSV) and Lys-278 each bind ATP. Residue Asp-374 is the Proton acceptor of the active site. The residue at position 402 (Ser-402) is a Phosphoserine. Phosphothreonine is present on Thr-408. The interval 473–499 (IAAERNGQNSPSRSRKNKQKGNGYNSY) is disordered.

Belongs to the protein kinase superfamily. STE Ser/Thr protein kinase family. MAP kinase kinase subfamily.

The enzyme catalyses L-seryl-[protein] + ATP = O-phospho-L-seryl-[protein] + ADP + H(+). The catalysed reaction is L-threonyl-[protein] + ATP = O-phospho-L-threonyl-[protein] + ADP + H(+). It carries out the reaction L-tyrosyl-[protein] + ATP = O-phospho-L-tyrosyl-[protein] + ADP + H(+). The polypeptide is Serine/threonine-protein kinase STE7 homolog (HST7) (Candida albicans (strain WO-1) (Yeast)).